Here is a 141-residue protein sequence, read N- to C-terminus: MAKKVANIVKLQIPAGKATPAPPVGPALGQAGINIMGFTKDFNARTADQAGLLIPVVITVYEDRSFDFVTKTPPASVLLKKAAGVEHGSGEPNTNKVATVTSAQVKEIAETKMQDLNAADVEAAMRMIEGTARSMGFVVEG.

The protein belongs to the universal ribosomal protein uL11 family. Part of the ribosomal stalk of the 50S ribosomal subunit. Interacts with L10 and the large rRNA to form the base of the stalk. L10 forms an elongated spine to which L12 dimers bind in a sequential fashion forming a multimeric L10(L12)X complex. In terms of processing, one or more lysine residues are methylated.

Forms part of the ribosomal stalk which helps the ribosome interact with GTP-bound translation factors. The polypeptide is Large ribosomal subunit protein uL11 (Pediococcus pentosaceus (strain ATCC 25745 / CCUG 21536 / LMG 10740 / 183-1w)).